Here is a 115-residue protein sequence, read N- to C-terminus: Large ribosomal subunit protein bL19 (115 aa).

This sequence belongs to the bacterial ribosomal protein bL19 family.

This protein is located at the 30S-50S ribosomal subunit interface and may play a role in the structure and function of the aminoacyl-tRNA binding site. This is Large ribosomal subunit protein bL19 from Caldanaerobacter subterraneus subsp. tengcongensis (strain DSM 15242 / JCM 11007 / NBRC 100824 / MB4) (Thermoanaerobacter tengcongensis).